The chain runs to 221 residues: Ribosomal RNA large subunit methyltransferase E (221 aa).

S-adenosyl-L-methionine-binding residues include G60, W62, D89, D105, and D134. The Proton acceptor role is filled by K174.

Belongs to the class I-like SAM-binding methyltransferase superfamily. RNA methyltransferase RlmE family.

Its subcellular location is the cytoplasm. The enzyme catalyses uridine(2552) in 23S rRNA + S-adenosyl-L-methionine = 2'-O-methyluridine(2552) in 23S rRNA + S-adenosyl-L-homocysteine + H(+). Its function is as follows. Specifically methylates the uridine in position 2552 of 23S rRNA at the 2'-O position of the ribose in the fully assembled 50S ribosomal subunit. This chain is Ribosomal RNA large subunit methyltransferase E, found in Cupriavidus metallidurans (strain ATCC 43123 / DSM 2839 / NBRC 102507 / CH34) (Ralstonia metallidurans).